The primary structure comprises 271 residues: MTNLPKVTIRDLAESGVHFGHKVSRWNAKMAPYIYGVHQQNRIHIIDLRKTLPLLEAAMKALYDVASQDGRILFVGTKFQALDIVASEAVRCGQYYVNDRWLGGMLTNWNTVSSSIKTLIQYEKILNDEDSILTKKELGNIEKKRKKLDKELGGIREMGAVPDILFIIDTNKEHIAVKEAKKLGIPVVGVLDTNSDPDDIAYPISGNDDSRKSIELYCKLAADSILAGIESSLTRSRVKDDELIQEKEGGIVQTKKKRMKDETEREVIVSK.

Belongs to the universal ribosomal protein uS2 family.

In Wolbachia pipientis subsp. Culex pipiens (strain wPip), this protein is Small ribosomal subunit protein uS2.